The sequence spans 173 residues: MEHSGILASLILIAVLPQGSPFKIQVTEYEDKVFVTCNTSVMHLDGTVEGWFAKNKTLNLGKGVLDPRGIYLCNGTEQLAKVVSSVQVHYRMCQNCVELDSGTMAGVIFIDLIATLLLALGVYCFAGHETGRPSGAAEVQALLKNEQLYQPLRDREDTQYSRLGGNWPRNKKS.

Positions 1–21 (MEHSGILASLILIAVLPQGSP) are cleaved as a signal peptide. Topologically, residues 22 to 105 (FKIQVTEYED…CVELDSGTMA (84 aa)) are extracellular. C37 and C73 are joined by a disulfide. N-linked (GlcNAc...) asparagine glycans are attached at residues N38, N55, and N74. Residues 106-126 (GVIFIDLIATLLLALGVYCFA) form a helical membrane-spanning segment. Topologically, residues 127-173 (GHETGRPSGAAEVQALLKNEQLYQPLRDREDTQYSRLGGNWPRNKKS) are cytoplasmic. The ITAM domain occupies 138 to 166 (EVQALLKNEQLYQPLRDREDTQYSRLGGN). 2 positions are modified to phosphotyrosine: Y149 and Y160.

As to quaternary structure, the TCR-CD3 complex is composed of a CD3D/CD3E and a CD3G/CD3E heterodimers that preferentially associate with TCRalpha and TCRbeta, respectively, to form TCRalpha/CD3E/CD3G and TCRbeta/CD3G/CD3E trimers. In turn, the hexamer interacts with CD3Z homodimer to form the TCR-CD3 complex. Alternatively, TCRalpha and TCRbeta can be replaced by TCRgamma and TCRdelta. Interacts with coreceptors CD4 and CD8. Post-translationally, phosphorylated on Tyr residues after T-cell receptor triggering by LCK in association with CD4/CD8.

It localises to the membrane. Its function is as follows. Part of the TCR-CD3 complex present on T-lymphocyte cell surface that plays an essential role in adaptive immune response. When antigen presenting cells (APCs) activate T-cell receptor (TCR), TCR-mediated signals are transmitted across the cell membrane by the CD3 chains CD3D, CD3E, CD3G and CD3Z. All CD3 chains contain immunoreceptor tyrosine-based activation motifs (ITAMs) in their cytoplasmic domain. Upon TCR engagement, these motifs become phosphorylated by Src family protein tyrosine kinases LCK and FYN, resulting in the activation of downstream signaling pathways. In addition of this role of signal transduction in T-cell activation, CD3D plays an essential role in thymocyte differentiation. Indeed, participates in correct intracellular TCR-CD3 complex assembly and surface expression. In absence of a functional TCR-CD3 complex, thymocytes are unable to differentiate properly. Interacts with CD4 and CD8 and thus serves to establish a functional link between the TCR and coreceptors CD4 and CD8, which is needed for activation and positive selection of CD4 or CD8 T-cells. The chain is T-cell surface glycoprotein CD3 delta chain (Cd3d) from Mus musculus (Mouse).